The primary structure comprises 77 residues: NAD(P)H-quinone oxidoreductase subunit L (77 aa).

A run of 2 helical transmembrane segments spans residues 12 to 32 (FVAY…ILFY) and 47 to 67 (LGVY…SPFL).

It belongs to the complex I NdhL subunit family. As to quaternary structure, NDH-1 can be composed of about 15 different subunits; different subcomplexes with different compositions have been identified which probably have different functions.

Its subcellular location is the cellular thylakoid membrane. It carries out the reaction a plastoquinone + NADH + (n+1) H(+)(in) = a plastoquinol + NAD(+) + n H(+)(out). The enzyme catalyses a plastoquinone + NADPH + (n+1) H(+)(in) = a plastoquinol + NADP(+) + n H(+)(out). Functionally, NDH-1 shuttles electrons from an unknown electron donor, via FMN and iron-sulfur (Fe-S) centers, to quinones in the respiratory and/or the photosynthetic chain. The immediate electron acceptor for the enzyme in this species is believed to be plastoquinone. Couples the redox reaction to proton translocation, and thus conserves the redox energy in a proton gradient. Cyanobacterial NDH-1 also plays a role in inorganic carbon-concentration. The sequence is that of NAD(P)H-quinone oxidoreductase subunit L from Prochlorococcus marinus (strain MIT 9515).